Reading from the N-terminus, the 54-residue chain is Potassium channel toxin alpha-KTx 14.1 (54 aa).

The signal sequence occupies residues 1–23; it reads MKIFFAILLILAVCSMAIWTVNG.

Belongs to the short scorpion toxin superfamily. Potassium channel inhibitor family. Alpha-KTx 14 subfamily. Probably has three disulfide bridges. Expressed by the venom gland.

It is found in the secreted. Potential blocker of potassium channels. This is Potassium channel toxin alpha-KTx 14.1 from Olivierus martensii (Manchurian scorpion).